The sequence spans 290 residues: ATP synthase gamma chain (290 aa).

It belongs to the ATPase gamma chain family. In terms of assembly, F-type ATPases have 2 components, CF(1) - the catalytic core - and CF(0) - the membrane proton channel. CF(1) has five subunits: alpha(3), beta(3), gamma(1), delta(1), epsilon(1). CF(0) has three main subunits: a, b and c.

Its subcellular location is the cell membrane. Functionally, produces ATP from ADP in the presence of a proton gradient across the membrane. The gamma chain is believed to be important in regulating ATPase activity and the flow of protons through the CF(0) complex. The sequence is that of ATP synthase gamma chain from Listeria innocua serovar 6a (strain ATCC BAA-680 / CLIP 11262).